Consider the following 443-residue polypeptide: NADH-ubiquinone oxidoreductase chain 4 (443 aa).

Helical transmembrane passes span 1–21, 27–47, 71–91, 93–113, 114–134, 148–168, 187–207, 217–237, 247–267, 279–299, 308–328, 335–355, 362–382, 385–405, and 423–443; these read MFISVLLILFALCVTLIPEAH, VWSFVATIIPMWVVTWMWWNF, GVALSLMLLTTVLFPICMMLL, TVAGFMTFILLEVLVLSALCV, LDLLGFYILFEASLILLFLLI, IVLYTMAGSLVLLPTLFMIYS, VLGWGLLAVLAVKIPLMPVHL, PTAGSVLLAGVLLKLGGIGFL, FCVSVFPLVSTLCLVSFLFST, IVAYSSIAHMSMVTLAIFSQS, FLMIAHGLISPALFLIVGILY, FILYFSGLGASMPIGSTLFFL, AFPLFPNFIAEVLCMVSIFAV, LLAYVFCVCQVLGAAYGFWAF, and EFHTVLPLLIGAVWLGIKPMA.

It belongs to the complex I subunit 4 family.

It is found in the mitochondrion membrane. It catalyses the reaction a ubiquinone + NADH + 5 H(+)(in) = a ubiquinol + NAD(+) + 4 H(+)(out). Functionally, core subunit of the mitochondrial membrane respiratory chain NADH dehydrogenase (Complex I) that is believed to belong to the minimal assembly required for catalysis. Complex I functions in the transfer of electrons from NADH to the respiratory chain. The immediate electron acceptor for the enzyme is believed to be ubiquinone. The sequence is that of NADH-ubiquinone oxidoreductase chain 4 (ND4) from Chlamydomonas reinhardtii (Chlamydomonas smithii).